Consider the following 127-residue polypeptide: Large ribosomal subunit protein bL17 (127 aa).

This sequence belongs to the bacterial ribosomal protein bL17 family. Part of the 50S ribosomal subunit. Contacts protein L32.

This chain is Large ribosomal subunit protein bL17, found in Pediococcus pentosaceus (strain ATCC 25745 / CCUG 21536 / LMG 10740 / 183-1w).